A 153-amino-acid polypeptide reads, in one-letter code: Ribosome maturation factor RimP (153 aa).

This sequence belongs to the RimP family.

The protein resides in the cytoplasm. Required for maturation of 30S ribosomal subunits. This Solibacter usitatus (strain Ellin6076) protein is Ribosome maturation factor RimP.